Here is a 431-residue protein sequence, read N- to C-terminus: Serine--tRNA ligase (431 aa).

The segment at 41–66 (QSRTQELQAERNARSKSIGEAARRGE) is disordered. 240 to 242 (TSE) serves as a coordination point for L-serine. 271–273 (RSE) serves as a coordination point for ATP. E294 is a binding site for L-serine. 358–361 (EISS) serves as a coordination point for ATP. S392 is an L-serine binding site.

This sequence belongs to the class-II aminoacyl-tRNA synthetase family. Type-1 seryl-tRNA synthetase subfamily. In terms of assembly, homodimer. The tRNA molecule binds across the dimer.

The protein localises to the cytoplasm. The catalysed reaction is tRNA(Ser) + L-serine + ATP = L-seryl-tRNA(Ser) + AMP + diphosphate + H(+). The enzyme catalyses tRNA(Sec) + L-serine + ATP = L-seryl-tRNA(Sec) + AMP + diphosphate + H(+). Its pathway is aminoacyl-tRNA biosynthesis; selenocysteinyl-tRNA(Sec) biosynthesis; L-seryl-tRNA(Sec) from L-serine and tRNA(Sec): step 1/1. Its function is as follows. Catalyzes the attachment of serine to tRNA(Ser). Is also able to aminoacylate tRNA(Sec) with serine, to form the misacylated tRNA L-seryl-tRNA(Sec), which will be further converted into selenocysteinyl-tRNA(Sec). This chain is Serine--tRNA ligase, found in Aeromonas salmonicida (strain A449).